The chain runs to 229 residues: tRNA (guanine-N(7)-)-methyltransferase (229 aa).

4 residues coordinate S-adenosyl-L-methionine: glutamate 62, glutamate 87, aspartate 114, and aspartate 137. Residue aspartate 137 is part of the active site. Lysine 141 contributes to the substrate binding site. An interaction with RNA region spans residues 143–148; that stretch reads KHNKRR. Substrate contacts are provided by residues aspartate 173 and 208-211; that span reads TKFE.

Belongs to the class I-like SAM-binding methyltransferase superfamily. TrmB family.

The enzyme catalyses guanosine(46) in tRNA + S-adenosyl-L-methionine = N(7)-methylguanosine(46) in tRNA + S-adenosyl-L-homocysteine. The protein operates within tRNA modification; N(7)-methylguanine-tRNA biosynthesis. In terms of biological role, catalyzes the formation of N(7)-methylguanine at position 46 (m7G46) in tRNA. The polypeptide is tRNA (guanine-N(7)-)-methyltransferase (Francisella philomiragia subsp. philomiragia (strain ATCC 25017 / CCUG 19701 / FSC 153 / O#319-036)).